The sequence spans 200 residues: 3-isopropylmalate dehydratase small subunit (200 aa).

Belongs to the LeuD family. LeuD type 1 subfamily. Heterodimer of LeuC and LeuD.

The enzyme catalyses (2R,3S)-3-isopropylmalate = (2S)-2-isopropylmalate. Its pathway is amino-acid biosynthesis; L-leucine biosynthesis; L-leucine from 3-methyl-2-oxobutanoate: step 2/4. Functionally, catalyzes the isomerization between 2-isopropylmalate and 3-isopropylmalate, via the formation of 2-isopropylmaleate. This chain is 3-isopropylmalate dehydratase small subunit, found in Aliivibrio fischeri (strain MJ11) (Vibrio fischeri).